Here is a 292-residue protein sequence, read N- to C-terminus: Non-homologous end joining protein Ku (292 aa).

Residues 9 to 187 (ITFGLVNVPV…TVPPITEREL (179 aa)) enclose the Ku domain. The segment covering 264 to 285 (AASAFPAAEKAPAGKNAATASA) has biased composition (low complexity). A disordered region spans residues 264–292 (AASAFPAAEKAPAGKNAATASAKKARKLA).

The protein belongs to the prokaryotic Ku family. In terms of assembly, homodimer. Interacts with LigD.

With LigD forms a non-homologous end joining (NHEJ) DNA repair enzyme, which repairs dsDNA breaks with reduced fidelity. Binds linear dsDNA with 5'- and 3'- overhangs but not closed circular dsDNA nor ssDNA. Recruits and stimulates the ligase activity of LigD. This chain is Non-homologous end joining protein Ku, found in Leifsonia xyli subsp. xyli (strain CTCB07).